Here is a 130-residue protein sequence, read N- to C-terminus: Transcription antitermination protein NusB (130 aa).

The protein belongs to the NusB family.

Its function is as follows. Involved in transcription antitermination. Required for transcription of ribosomal RNA (rRNA) genes. Binds specifically to the boxA antiterminator sequence of the ribosomal RNA (rrn) operons. The protein is Transcription antitermination protein NusB of Sulfurovum sp. (strain NBC37-1).